The following is a 595-amino-acid chain: Aspartate--tRNA ligase (595 aa).

Glu-180 serves as a coordination point for L-aspartate. Residues Gln-204 to Lys-207 are aspartate. Arg-226 lines the L-aspartate pocket. ATP is bound by residues Arg-226–Glu-228 and Gln-235. An L-aspartate-binding site is contributed by His-454. Glu-488 lines the ATP pocket. Arg-495 is a binding site for L-aspartate. Gly-540–Arg-543 lines the ATP pocket.

This sequence belongs to the class-II aminoacyl-tRNA synthetase family. Type 1 subfamily. As to quaternary structure, homodimer.

It localises to the cytoplasm. The enzyme catalyses tRNA(Asp) + L-aspartate + ATP = L-aspartyl-tRNA(Asp) + AMP + diphosphate. In terms of biological role, catalyzes the attachment of L-aspartate to tRNA(Asp) in a two-step reaction: L-aspartate is first activated by ATP to form Asp-AMP and then transferred to the acceptor end of tRNA(Asp). The polypeptide is Aspartate--tRNA ligase (Clostridium acetobutylicum (strain ATCC 824 / DSM 792 / JCM 1419 / IAM 19013 / LMG 5710 / NBRC 13948 / NRRL B-527 / VKM B-1787 / 2291 / W)).